The chain runs to 777 residues: Rho guanine nucleotide exchange factor 38 (777 aa).

At Thr34 the chain carries Phosphothreonine. The disordered stretch occupies residues 35–72; the sequence is DTVVESSVSGDHSGTLRRSQSDRTEYNQKLQEKMTPQG. Residues 37 to 52 are compositionally biased toward polar residues; that stretch reads VVESSVSGDHSGTLRR. The segment covering 53–66 has biased composition (basic and acidic residues); it reads SQSDRTEYNQKLQE. The DH domain occupies 94-285; that stretch reads KREKIIKELI…KDINVNINEL (192 aa). The BAR domain occupies 327–536; that stretch reads LKILTRGESQ…QNQVLEEIQN (210 aa). An SH3 1 domain is found at 582–645; that stretch reads SAEELYQAKR…YSSFLKPYNP (64 aa). Residues 673-694 are disordered; that stretch reads PASDSVTGTSESSIGDSSSSLS. Positions 679–694 are enriched in low complexity; that stretch reads TGTSESSIGDSSSSLS. The SH3 2 domain occupies 713 to 776; that stretch reads VDEQIFYAVH…PANYLGKMTY (64 aa).

Functionally, may act as a guanine-nucleotide releasing factor. The sequence is that of Rho guanine nucleotide exchange factor 38 (ARHGEF38) from Homo sapiens (Human).